The sequence spans 620 residues: Two-component response regulator ORR27 (620 aa).

Positions H24–L138 constitute a Response regulatory domain. A 4-aspartylphosphate modification is found at D76. Disordered regions lie at residues P171–S197 and V215–T257. Positions K261–E321 form a DNA-binding region, myb-like GARP. The segment covering S431–T456 has biased composition (polar residues). Disordered regions lie at residues S431–R457, S501–T523, and P596–P620. Positions E603–P620 are enriched in polar residues.

It belongs to the ARR family. Type-B subfamily. In terms of processing, two-component system major event consists of a His-to-Asp phosphorelay between a sensor histidine kinase (HK) and a response regulator (RR). In plants, the His-to-Asp phosphorelay involves an additional intermediate named Histidine-containing phosphotransfer protein (HPt). This multistep phosphorelay consists of a His-Asp-His-Asp sequential transfer of a phosphate group between first a His and an Asp of the HK protein, followed by the transfer to a conserved His of the HPt protein and finally the transfer to an Asp in the receiver domain of the RR protein.

It localises to the nucleus. In terms of biological role, transcriptional activator that binds specific DNA sequence. Functions as a response regulator involved in His-to-Asp phosphorelay signal transduction system. Phosphorylation of the Asp residue in the receiver domain activates the ability of the protein to promote the transcription of target genes. May directly activate some type-A response regulators in response to cytokinins. This Oryza sativa subsp. japonica (Rice) protein is Two-component response regulator ORR27.